Consider the following 229-residue polypeptide: Large ribosomal subunit protein uL1 (229 aa).

Belongs to the universal ribosomal protein uL1 family. As to quaternary structure, part of the 50S ribosomal subunit.

Binds directly to 23S rRNA. The L1 stalk is quite mobile in the ribosome, and is involved in E site tRNA release. In terms of biological role, protein L1 is also a translational repressor protein, it controls the translation of the L11 operon by binding to its mRNA. This chain is Large ribosomal subunit protein uL1, found in Streptococcus pneumoniae (strain ATCC 700669 / Spain 23F-1).